The sequence spans 61 residues: MKLSALSLAFAIILMMTIMYTKADADASADAEADADAEAEAIWGALLGTLIPAITSAIQGK.

Residues 1–23 (MKLSALSLAFAIILMMTIMYTKA) form the signal peptide. A propeptide spanning residues 24–41 (DADASADAEADADAEAEA) is cleaved from the precursor. Position 59 is a glutamine amide (Gln-59).

This sequence belongs to the formicidae venom precursor-01 superfamily. In terms of processing, truncated sequences of this peptide have also been found in the venom. It is possible they have been cleaved in the venom. As to expression, expressed by the venom gland.

Its subcellular location is the secreted. In terms of biological role, acidic peptide with potent hemolytic activities (94.8% at 50 uM). It also shows low antimicrobial activities against E.coli (MIC=50uM), as well as histamine-releasing activity (28.3% at 10 uM). Does not have activity against S.aureus, and S.cerevisiae. This Odontomachus monticola (Trap-jaw ant) protein is U-poneritoxin(01)-Om5a.